The primary structure comprises 23 residues: Conotoxin Tx6.5 (23 aa).

3 cysteine pairs are disulfide-bonded: cysteine 2–cysteine 10, cysteine 5–cysteine 15, and cysteine 9–cysteine 20. Proline 12 carries the post-translational modification 4-hydroxyproline; partial.

The protein belongs to the conotoxin U superfamily. As to expression, expressed by the venom duct.

It localises to the secreted. This Conus textile (Cloth-of-gold cone) protein is Conotoxin Tx6.5.